Consider the following 159-residue polypeptide: 2-C-methyl-D-erythritol 2,4-cyclodiphosphate synthase (159 aa).

A divalent metal cation is bound by residues Asp-10 and His-12. Residues 10-12 and 36-37 each bind 4-CDP-2-C-methyl-D-erythritol 2-phosphate; these read DVH and HS. His-44 lines the a divalent metal cation pocket. Residues 58 to 60, 63 to 67, 102 to 108, 134 to 137, Phe-141, 141 to 144, and Arg-144 each bind 4-CDP-2-C-methyl-D-erythritol 2-phosphate; these read DIG, FPDTD, AQAPKMA, TTTE, and FTGR.

This sequence belongs to the IspF family. In terms of assembly, homotrimer. The cofactor is a divalent metal cation.

It carries out the reaction 4-CDP-2-C-methyl-D-erythritol 2-phosphate = 2-C-methyl-D-erythritol 2,4-cyclic diphosphate + CMP. The protein operates within isoprenoid biosynthesis; isopentenyl diphosphate biosynthesis via DXP pathway; isopentenyl diphosphate from 1-deoxy-D-xylulose 5-phosphate: step 4/6. Involved in the biosynthesis of isopentenyl diphosphate (IPP) and dimethylallyl diphosphate (DMAPP), two major building blocks of isoprenoid compounds. Catalyzes the conversion of 4-diphosphocytidyl-2-C-methyl-D-erythritol 2-phosphate (CDP-ME2P) to 2-C-methyl-D-erythritol 2,4-cyclodiphosphate (ME-CPP) with a corresponding release of cytidine 5-monophosphate (CMP). The protein is 2-C-methyl-D-erythritol 2,4-cyclodiphosphate synthase of Shewanella oneidensis (strain ATCC 700550 / JCM 31522 / CIP 106686 / LMG 19005 / NCIMB 14063 / MR-1).